The chain runs to 382 residues: MSTYTRPVMLLLSGLLLLTLAIAVLNTLVPLWLAQEHMSTWQVGVVSSSYFTGNLVGTLLTGYVIKRIGFNRSYYLASFIFAAGCAGLGLMIGFWSWLTWRFVAGVGCAMIWVVVESALMCSGTSRNRGRLLAAYMMVYYVGTFLGQLLVSKVSTELMSVLPWVTGLTLAGILPLLFTRVLNQQAENHDSTSITSMLKLRQARLGVNGCIISGIVLGSLYGLMPLFLNHKGVSNASIGFWMAVLVSAGILGQWPIGRLADKFGRLLVLRVQVFVVILGSIAMLSQAAMAPALFILGAAGFTLYPVAMAWACEKVEHHQLVAMNQALLLSYTVGSLLGPSFTAMLMQNFSDNLLFIMIASVSFIYLLMLLRNAGHTPKPVAHV.

Transmembrane regions (helical) follow at residues G14–A34, V45–I65, Y75–W95, F102–S122, L131–S151, L157–F177, V206–F226, A235–I255, V270–P290, A291–C311, A325–M345, and F348–L368.

The protein belongs to the major facilitator superfamily. YcaD (TC 2.A.1.26) family.

The protein localises to the cell inner membrane. This is an uncharacterized protein from Escherichia coli O17:K52:H18 (strain UMN026 / ExPEC).